The chain runs to 135 residues: Large ribosomal subunit protein uL18 (135 aa).

Residues 1–25 (MAQTENQKSKRIPLGKDVSTQRRLS) are disordered.

Belongs to the universal ribosomal protein uL18 family. As to quaternary structure, part of the 50S ribosomal subunit; part of the 5S rRNA/L5/L18/L25 subcomplex. Contacts the 5S and 23S rRNAs.

In terms of biological role, this is one of the proteins that bind and probably mediate the attachment of the 5S RNA into the large ribosomal subunit, where it forms part of the central protuberance. The polypeptide is Large ribosomal subunit protein uL18 (Nocardia farcinica (strain IFM 10152)).